A 238-amino-acid polypeptide reads, in one-letter code: Ribonuclease PH (238 aa).

Residues Arg86 and 124–126 contribute to the phosphate site; that span reads GTR.

This sequence belongs to the RNase PH family. As to quaternary structure, homohexameric ring arranged as a trimer of dimers.

The enzyme catalyses tRNA(n+1) + phosphate = tRNA(n) + a ribonucleoside 5'-diphosphate. Functionally, phosphorolytic 3'-5' exoribonuclease that plays an important role in tRNA 3'-end maturation. Removes nucleotide residues following the 3'-CCA terminus of tRNAs; can also add nucleotides to the ends of RNA molecules by using nucleoside diphosphates as substrates, but this may not be physiologically important. Probably plays a role in initiation of 16S rRNA degradation (leading to ribosome degradation) during starvation. The protein is Ribonuclease PH of Escherichia coli O6:K15:H31 (strain 536 / UPEC).